The primary structure comprises 434 residues: Glutamyl-tRNA reductase (434 aa).

Substrate is bound by residues 57-60 (TCNR), serine 116, 121-123 (ETQ), and glutamine 127. Cysteine 58 serves as the catalytic Nucleophile. Residue 196–201 (GAGEMI) participates in NADP(+) binding.

It belongs to the glutamyl-tRNA reductase family. As to quaternary structure, homodimer.

It catalyses the reaction (S)-4-amino-5-oxopentanoate + tRNA(Glu) + NADP(+) = L-glutamyl-tRNA(Glu) + NADPH + H(+). It participates in porphyrin-containing compound metabolism; protoporphyrin-IX biosynthesis; 5-aminolevulinate from L-glutamyl-tRNA(Glu): step 1/2. In terms of biological role, catalyzes the NADPH-dependent reduction of glutamyl-tRNA(Glu) to glutamate 1-semialdehyde (GSA). This is Glutamyl-tRNA reductase from Burkholderia pseudomallei (strain 1106a).